The primary structure comprises 194 residues: Oligoribonuclease (194 aa).

Residues 11–174 enclose the Exonuclease domain; it reads LIWIDLEMTG…SDVRDSIDEL (164 aa). Residue Tyr132 is part of the active site.

This sequence belongs to the oligoribonuclease family.

It is found in the cytoplasm. Its function is as follows. 3'-to-5' exoribonuclease specific for small oligoribonucleotides. The polypeptide is Oligoribonuclease (Xanthomonas euvesicatoria pv. vesicatoria (strain 85-10) (Xanthomonas campestris pv. vesicatoria)).